Consider the following 558-residue polypeptide: T-complex protein 1 subunit gamma (558 aa).

A disulfide bond links cysteine 381 and cysteine 387.

The protein belongs to the TCP-1 chaperonin family. As to quaternary structure, heterooligomeric complex of about 850 to 900 kDa that forms two stacked rings, 12 to 16 nm in diameter.

The protein resides in the cytoplasm. Its function is as follows. Molecular chaperone; assists the folding of proteins upon ATP hydrolysis. Known to play a role, in vitro, in the folding of actin and tubulin. This Thalassiosira weissflogii (Marine diatom) protein is T-complex protein 1 subunit gamma.